Consider the following 270-residue polypeptide: Glutamate racemase (270 aa).

Substrate contacts are provided by residues 10 to 11 (DS) and 42 to 43 (YG). Cys-74 functions as the Proton donor/acceptor in the catalytic mechanism. Residue 75–76 (NT) coordinates substrate. The active-site Proton donor/acceptor is Cys-189. 190 to 191 (TH) provides a ligand contact to substrate.

It belongs to the aspartate/glutamate racemases family.

It carries out the reaction L-glutamate = D-glutamate. The protein operates within cell wall biogenesis; peptidoglycan biosynthesis. Functionally, provides the (R)-glutamate required for cell wall biosynthesis. The polypeptide is Glutamate racemase (Bartonella henselae (strain ATCC 49882 / DSM 28221 / CCUG 30454 / Houston 1) (Rochalimaea henselae)).